Consider the following 177-residue polypeptide: Large ribosomal subunit protein uL6 (177 aa).

The protein belongs to the universal ribosomal protein uL6 family. Part of the 50S ribosomal subunit.

This protein binds to the 23S rRNA, and is important in its secondary structure. It is located near the subunit interface in the base of the L7/L12 stalk, and near the tRNA binding site of the peptidyltransferase center. This chain is Large ribosomal subunit protein uL6, found in Methylobacterium sp. (strain 4-46).